Reading from the N-terminus, the 260-residue chain is Taurine import ATP-binding protein TauB (260 aa).

In terms of domain architecture, ABC transporter spans 6–235 (AQQVSVVYAS…RYAHGEPMRS (230 aa)). 40–47 (GASGCGKS) contributes to the ATP binding site.

This sequence belongs to the ABC transporter superfamily. Taurine importer (TC 3.A.1.17.1) family. As to quaternary structure, the complex is composed of two ATP-binding proteins (TauB), two transmembrane proteins (TauC) and a solute-binding protein (TauA).

It is found in the cell inner membrane. The enzyme catalyses taurine(out) + ATP + H2O = taurine(in) + ADP + phosphate + H(+). In terms of biological role, part of the ABC transporter complex TauABC involved in taurine import. Responsible for energy coupling to the transport system. The sequence is that of Taurine import ATP-binding protein TauB from Burkholderia pseudomallei (strain 1710b).